The chain runs to 384 residues: Lipid-A-disaccharide synthase 1 (384 aa).

It belongs to the LpxB family.

It carries out the reaction a lipid X + a UDP-2-N,3-O-bis[(3R)-3-hydroxyacyl]-alpha-D-glucosamine = a lipid A disaccharide + UDP + H(+). It functions in the pathway bacterial outer membrane biogenesis; LPS lipid A biosynthesis. In terms of biological role, condensation of UDP-2,3-diacylglucosamine and 2,3-diacylglucosamine-1-phosphate to form lipid A disaccharide, a precursor of lipid A, a phosphorylated glycolipid that anchors the lipopolysaccharide to the outer membrane of the cell. In Legionella pneumophila subsp. pneumophila (strain Philadelphia 1 / ATCC 33152 / DSM 7513), this protein is Lipid-A-disaccharide synthase 1.